The chain runs to 353 residues: MLIFPLLNDLSRKIIHIDMDAFFAAVEIRDNPKLRGKPVIIGSDPRQTGGRGVVSTCSYEARAFGVHSAMSSKEAYERCPQAVFISGNYEKYKSVGLQIRAIFKRYTDLIEPMSIDEAYLDVTENKLGIKSAVKIARLIQKDIWQELHLTASAGVSYNKFLAKMASDYQKPHGLTVILPEQAEDFLKQMDISKFHGVGKKTVERLHQMGVFTGADLLEVPEVTLIDRFGRLGYDLYRKARGIHNSPVKSNRIRKSIGKEKTYGKILLAEEDIKKELTLLSEKVALNLHQQEKAGKIVILKIRYEDFSTLTKRKSLAQKTQDASQISQIALQLYEELSKKERGVRLLGITMTGF.

One can recognise a UmuC domain in the interval 14–198; sequence IIHIDMDAFF…MDISKFHGVG (185 aa). 2 residues coordinate Mg(2+): D18 and D116. E117 is a catalytic residue.

Belongs to the DNA polymerase type-Y family. In terms of assembly, monomer. The cofactor is Mg(2+).

The protein resides in the cytoplasm. The catalysed reaction is DNA(n) + a 2'-deoxyribonucleoside 5'-triphosphate = DNA(n+1) + diphosphate. Poorly processive, error-prone DNA polymerase involved in untargeted mutagenesis. Copies undamaged DNA at stalled replication forks, which arise in vivo from mismatched or misaligned primer ends. These misaligned primers can be extended by PolIV. Exhibits no 3'-5' exonuclease (proofreading) activity. May be involved in translesional synthesis, in conjunction with the beta clamp from PolIII. In Streptococcus pneumoniae serotype 4 (strain ATCC BAA-334 / TIGR4), this protein is DNA polymerase IV.